Reading from the N-terminus, the 416-residue chain is Serine hydroxymethyltransferase (416 aa).

(6S)-5,6,7,8-tetrahydrofolate is bound by residues Leu121 and 125–127; that span reads GHL. An N6-(pyridoxal phosphate)lysine modification is found at Lys229. Residues Glu245 and 354-356 contribute to the (6S)-5,6,7,8-tetrahydrofolate site; that span reads SPF.

Belongs to the SHMT family. As to quaternary structure, homodimer. Pyridoxal 5'-phosphate is required as a cofactor.

The protein resides in the cytoplasm. The enzyme catalyses (6R)-5,10-methylene-5,6,7,8-tetrahydrofolate + glycine + H2O = (6S)-5,6,7,8-tetrahydrofolate + L-serine. It participates in one-carbon metabolism; tetrahydrofolate interconversion. It functions in the pathway amino-acid biosynthesis; glycine biosynthesis; glycine from L-serine: step 1/1. Catalyzes the reversible interconversion of serine and glycine with tetrahydrofolate (THF) serving as the one-carbon carrier. This reaction serves as the major source of one-carbon groups required for the biosynthesis of purines, thymidylate, methionine, and other important biomolecules. Also exhibits THF-independent aldolase activity toward beta-hydroxyamino acids, producing glycine and aldehydes, via a retro-aldol mechanism. This Aliivibrio fischeri (strain ATCC 700601 / ES114) (Vibrio fischeri) protein is Serine hydroxymethyltransferase.